A 256-amino-acid chain; its full sequence is Probable transcriptional regulatory protein cce_0894 (256 aa).

The protein belongs to the TACO1 family.

The protein localises to the cytoplasm. This Crocosphaera subtropica (strain ATCC 51142 / BH68) (Cyanothece sp. (strain ATCC 51142)) protein is Probable transcriptional regulatory protein cce_0894.